The primary structure comprises 72 residues: Metallothionein-like protein 1 (72 aa).

This sequence belongs to the metallothionein superfamily. Type 15 family.

In terms of biological role, metallothioneins have a high content of cysteine residues that bind various heavy metals. The protein is Metallothionein-like protein 1 of Erythranthe guttata (Yellow monkey flower).